Here is an 86-residue protein sequence, read N- to C-terminus: Weak toxin 2 (86 aa).

A signal peptide spans 1 to 23 (MKTLLLTLVVVAIVCLDLGYTLT). Cystine bridges form between Cys-24–Cys-45, Cys-27–Cys-32, Cys-38–Cys-63, Cys-67–Cys-78, and Cys-79–Cys-84.

Belongs to the three-finger toxin family. Ancestral subfamily. Orphan group II sub-subfamily. As to expression, expressed by the venom gland.

The protein localises to the secreted. In terms of biological role, binds with low affinity to muscular (alpha-1-beta-1-delta-epsilon/CHRNA1-CHRNB1-CHRND-CHRNE) and very low affinity to neuronal (alpha-7/CHRNA7) nicotinic acetylcholine receptor (nAChR). The polypeptide is Weak toxin 2 (Bungarus candidus (Malayan krait)).